A 263-amino-acid polypeptide reads, in one-letter code: Acetyl-coenzyme A carboxylase carboxyl transferase subunit beta (263 aa).

Positions Met-1–Ala-263 constitute a CoA carboxyltransferase N-terminal domain. Positions 3, 6, 22, and 25 each coordinate Zn(2+). A C4-type zinc finger spans residues Cys-3–Cys-25.

This sequence belongs to the AccD/PCCB family. Acetyl-CoA carboxylase is a heterohexamer composed of biotin carboxyl carrier protein (AccB), biotin carboxylase (AccC) and two subunits each of ACCase subunit alpha (AccA) and ACCase subunit beta (AccD). Zn(2+) serves as cofactor.

Its subcellular location is the cytoplasm. It carries out the reaction N(6)-carboxybiotinyl-L-lysyl-[protein] + acetyl-CoA = N(6)-biotinyl-L-lysyl-[protein] + malonyl-CoA. Its pathway is lipid metabolism; malonyl-CoA biosynthesis; malonyl-CoA from acetyl-CoA: step 1/1. In terms of biological role, component of the acetyl coenzyme A carboxylase (ACC) complex. Biotin carboxylase (BC) catalyzes the carboxylation of biotin on its carrier protein (BCCP) and then the CO(2) group is transferred by the transcarboxylase to acetyl-CoA to form malonyl-CoA. The chain is Acetyl-coenzyme A carboxylase carboxyl transferase subunit beta from Treponema denticola (strain ATCC 35405 / DSM 14222 / CIP 103919 / JCM 8153 / KCTC 15104).